The following is a 345-amino-acid chain: Dihydroorotate dehydrogenase (quinone) (345 aa).

Residues 65-69 (AGLDK) and Thr89 each bind FMN. Lys69 provides a ligand contact to substrate. Residue 114 to 118 (NRLGF) participates in substrate binding. 2 residues coordinate FMN: Asn146 and Asn179. Asn179 is a binding site for substrate. The Nucleophile role is filled by Ser182. Asn184 is a binding site for substrate. The FMN site is built by Lys224 and Thr252. 253-254 (NT) is a binding site for substrate. FMN-binding positions include Gly275, Gly304, and 325 to 326 (YT).

It belongs to the dihydroorotate dehydrogenase family. Type 2 subfamily. In terms of assembly, monomer. FMN is required as a cofactor.

The protein localises to the cell membrane. It catalyses the reaction (S)-dihydroorotate + a quinone = orotate + a quinol. Its pathway is pyrimidine metabolism; UMP biosynthesis via de novo pathway; orotate from (S)-dihydroorotate (quinone route): step 1/1. Catalyzes the conversion of dihydroorotate to orotate with quinone as electron acceptor. The chain is Dihydroorotate dehydrogenase (quinone) from Leptothrix cholodnii (strain ATCC 51168 / LMG 8142 / SP-6) (Leptothrix discophora (strain SP-6)).